The chain runs to 201 residues: NADH-quinone oxidoreductase subunit C (201 aa).

It belongs to the complex I 30 kDa subunit family. NDH-1 is composed of 14 different subunits. Subunits NuoB, C, D, E, F, and G constitute the peripheral sector of the complex.

It is found in the cell inner membrane. The catalysed reaction is a quinone + NADH + 5 H(+)(in) = a quinol + NAD(+) + 4 H(+)(out). In terms of biological role, NDH-1 shuttles electrons from NADH, via FMN and iron-sulfur (Fe-S) centers, to quinones in the respiratory chain. The immediate electron acceptor for the enzyme in this species is believed to be ubiquinone. Couples the redox reaction to proton translocation (for every two electrons transferred, four hydrogen ions are translocated across the cytoplasmic membrane), and thus conserves the redox energy in a proton gradient. This Azoarcus sp. (strain BH72) protein is NADH-quinone oxidoreductase subunit C.